Reading from the N-terminus, the 177-residue chain is FCS-Like Zinc finger 1 (177 aa).

A compositionally biased stretch (low complexity) spans 22–46 (SLSEMEAGFSGNNNNSNNHGNPQNG). Disordered stretches follow at residues 22-49 (SLSE…GVVS) and 134-177 (ERDE…VAAA). An FLZ-type zinc finger spans residues 96 to 140 (HFLDSCFLCKKPLGDNRDIYMYRGDTPFCSEECRQEQIERDEAKE). Composition is skewed to basic and acidic residues over residues 134–143 (ERDEAKEKKQ) and 154–168 (RRKE…RDYA).

Belongs to the FLZ family. In terms of assembly, interacts with KIN10 and KIN11 via its FLZ-type zinc finger domain. Interacts with KINB1, KINB2 and KINB3 via its N-terminal part. Interacts with DSP3 and BBX21 via its FLZ-type zinc finger domain. Forms heterodimer with FLZ7 and FLZ15 in vitro.

The protein resides in the nucleus. The protein localises to the cytoplasm. May act as an adapter to facilitate the interaction of SnRK1 complex with effector proteins, conferring tissue- and stimulus-type specific differences in the SnRK1 regulation pathway. The chain is FCS-Like Zinc finger 1 from Arabidopsis thaliana (Mouse-ear cress).